The sequence spans 37 residues: TIINVKCTSPKQCVPACKAAMGTVRAKCINGKCKCYI.

3 disulfides stabilise this stretch: Cys7–Cys28, Cys13–Cys33, and Cys17–Cys35.

Belongs to the short scorpion toxin superfamily. Potassium channel inhibitor family. Alpha-KTx 02 subfamily. Expressed by the venom gland.

The protein localises to the secreted. Reversibly blocks hKv1.1/KCNA1 (50% inhibition of current at 1 uM). Seems not to be voltage-dependent. This chain is Potassium channel toxin alpha-KTx 2.14, found in Heteroctenus garridoi (Cuban scorpion).